Consider the following 317-residue polypeptide: Melanocyte-stimulating hormone receptor (317 aa).

At 1–37 the chain is on the extracellular side; it reads MPMQGAQRRLLGSLNSIPTATPNLGLAANHTGAPCLE. N29 carries N-linked (GlcNAc...) asparagine glycosylation. The chain crosses the membrane as a helical span at residues 38–63; that stretch reads VSIPDWLFLSLGLVSLVQNVLVVAAI. The Cytoplasmic segment spans residues 64–72; it reads AKNRNLHSP. A helical transmembrane segment spans residues 73–93; sequence MYCFICCLALSDLLVSGSNML. Over 94 to 118 the chain is Extracellular; sequence ETAVILMLEAGALATRASVVQQLQN. A helical transmembrane segment spans residues 119-140; the sequence is TIDVLTCSSMLCSLCFLGAIAL. Topologically, residues 141-163 are cytoplasmic; it reads DRYVSIFYALRYHSIVTLPRARR. Residues 164-183 form a helical membrane-spanning segment; it reads AIAATWVASVLSSTLFIAYC. The Extracellular segment spans residues 184 to 191; sequence DHAAVLLC. The helical transmembrane segment at 192–211 threads the bilayer; sequence LVVFFLAMLVLMAVLYVHML. The Cytoplasmic portion of the chain corresponds to 212–240; sequence ARACQHAQGITRLHKRQLPAHQGFGLRGA. Residues 241–266 traverse the membrane as a helical segment; sequence ATLTILLGIFFLCWGPFFLHLMLVVL. Topologically, residues 267-279 are extracellular; that stretch reads CPQHLTCSCIFKN. Residues 280–300 traverse the membrane as a helical segment; sequence FKVFLTLIICNTIIDPLIYAF. Residues 301–317 are Cytoplasmic-facing; sequence RSQELCRTLKEVLLCSW. Residue C315 is the site of S-palmitoyl cysteine attachment.

It belongs to the G-protein coupled receptor 1 family. As to quaternary structure, interacts with MGRN1, but does not undergo MGRN1-mediated ubiquitination; this interaction competes with GNAS-binding and thus inhibits agonist-induced cAMP production. Interacts with OPN3; the interaction results in a decrease in MC1R-mediated cAMP signaling and ultimately a decrease in melanin production in melanocytes.

The protein localises to the cell membrane. In terms of biological role, receptor for MSH (alpha, beta and gamma) and ACTH. The activity of this receptor is mediated by G proteins which activate adenylate cyclase. Mediates melanogenesis, the production of eumelanin (black/brown) and phaeomelanin (red/yellow), via regulation of cAMP signaling in melanocytes. The polypeptide is Melanocyte-stimulating hormone receptor (MC1R) (Alouatta seniculus (Red howler monkey)).